We begin with the raw amino-acid sequence, 128 residues long: MFYSIVAIFVGAGLGALLRWFLSIGLNALLPEVPLGTLASNLIGGYLIGIAVVAFATRAGLPPEWRLFVITGFMGGLTTFSTYSVEVMTHAVQGEFGWALAVAALHLIGSFTLTGLGMWTARAWLAPA.

A run of 4 helical transmembrane segments spans residues 5–25 (IVAI…LSIG), 35–55 (LGTL…VVAF), 67–87 (LFVI…SVEV), and 96–116 (FGWA…LTGL). The Na(+) site is built by Gly-75 and Thr-78.

This sequence belongs to the fluoride channel Fluc/FEX (TC 1.A.43) family.

Its subcellular location is the cell inner membrane. The enzyme catalyses fluoride(in) = fluoride(out). With respect to regulation, na(+) is not transported, but it plays an essential structural role and its presence is essential for fluoride channel function. Fluoride-specific ion channel. Important for reducing fluoride concentration in the cell, thus reducing its toxicity. This is Fluoride-specific ion channel FluC from Burkholderia pseudomallei (strain 1106a).